The following is a 355-amino-acid chain: 1D-myo-inositol 2-acetamido-2-deoxy-alpha-D-glucopyranoside deacetylase 3 (355 aa).

Zn(2+) is bound by residues histidine 31, aspartate 34, and histidine 169.

Belongs to the MshB deacetylase family. The cofactor is Zn(2+).

It catalyses the reaction 1D-myo-inositol 2-acetamido-2-deoxy-alpha-D-glucopyranoside + H2O = 1D-myo-inositol 2-amino-2-deoxy-alpha-D-glucopyranoside + acetate. Catalyzes the deacetylation of 1D-myo-inositol 2-acetamido-2-deoxy-alpha-D-glucopyranoside (GlcNAc-Ins) in the mycothiol biosynthesis pathway. This is 1D-myo-inositol 2-acetamido-2-deoxy-alpha-D-glucopyranoside deacetylase 3 from Catenulispora acidiphila (strain DSM 44928 / JCM 14897 / NBRC 102108 / NRRL B-24433 / ID139908).